Consider the following 547-residue polypeptide: Chaperonin GroEL (547 aa).

ATP is bound by residues T30–P33, K51, D87–T91, G415, and D496. Positions K528–M547 are disordered. Gly residues predominate over residues A531–M547.

It belongs to the chaperonin (HSP60) family. As to quaternary structure, forms a cylinder of 14 subunits composed of two heptameric rings stacked back-to-back. Interacts with the co-chaperonin GroES.

It is found in the cytoplasm. It catalyses the reaction ATP + H2O + a folded polypeptide = ADP + phosphate + an unfolded polypeptide.. In terms of biological role, together with its co-chaperonin GroES, plays an essential role in assisting protein folding. The GroEL-GroES system forms a nano-cage that allows encapsulation of the non-native substrate proteins and provides a physical environment optimized to promote and accelerate protein folding. The polypeptide is Chaperonin GroEL (Dinoroseobacter shibae (strain DSM 16493 / NCIMB 14021 / DFL 12)).